The following is a 167-amino-acid chain: Phospholipase A2 imperatoxin-1 (167 aa).

3 residues coordinate Ca(2+): tryptophan 38, glycine 40, and glycine 42. 5 cysteine pairs are disulfide-bonded: cysteine 39/cysteine 61, cysteine 60/cysteine 99, cysteine 67/cysteine 92, cysteine 90/cysteine 127, and cysteine 132/cysteine 144. Residue histidine 64 is part of the active site. Residue aspartate 65 participates in Ca(2+) binding. Residue asparagine 102 is glycosylated (N-linked (GlcNAc...) asparagine). Positions 136–140 (RRLAR) are excised as a propeptide.

This sequence belongs to the phospholipase A2 family. Group III subfamily. In terms of assembly, heterodimer composed of a large subunit and a small subunit; disulfide-linked. Ca(2+) serves as cofactor. As to expression, expressed by the venom gland.

It localises to the secreted. It catalyses the reaction a 1,2-diacyl-sn-glycero-3-phosphocholine + H2O = a 1-acyl-sn-glycero-3-phosphocholine + a fatty acid + H(+). Phospholipase toxin, which may catalyze the calcium-dependent hydrolysis of the 2-acyl groups in 3-sn-phosphoglycerides. Inhibits both skeletal (RYR1) and cardiac (RYR2) ryanodine receptors (calcium release channels). Probably blocks ryanodine receptors by generating a lipid product. This is Phospholipase A2 imperatoxin-1 from Pandinus imperator (Emperor scorpion).